The sequence spans 616 residues: Coagulation factor XII (616 aa).

Residues methionine 1–leucine 19 form the signal peptide. Residues valine 42–glutamate 90 enclose the Fibronectin type-II domain. Intrachain disulfides connect cysteine 47–cysteine 73, cysteine 61–cysteine 88, cysteine 98–cysteine 110, cysteine 104–cysteine 119, cysteine 121–cysteine 130, cysteine 135–cysteine 163, cysteine 161–cysteine 170, cysteine 178–cysteine 189, cysteine 183–cysteine 198, cysteine 200–cysteine 209, cysteine 217–cysteine 295, cysteine 238–cysteine 277, and cysteine 266–cysteine 290. Residues valine 94 to glutamine 131 enclose the EGF-like 1 domain. An O-linked (Fuc) threonine glycan is attached at threonine 109. In terms of domain architecture, Fibronectin type-I spans glutamate 133–valine 173. The EGF-like 2 domain maps to alanine 174–aspartate 210. The region spanning arginine 216 to cysteine 295 is the Kringle domain. Asparagine 249, asparagine 271, and asparagine 335 each carry an N-linked (GlcNAc...) asparagine glycan. A disordered region spans residues proline 303–alanine 342. Residues proline 325–serine 338 show a composition bias toward polar residues. 7 disulfide bridges follow: cysteine 358/cysteine 485, cysteine 396/cysteine 412, cysteine 404/cysteine 474, cysteine 435/cysteine 438, cysteine 501/cysteine 570, cysteine 533/cysteine 549, and cysteine 560/cysteine 591. The 244-residue stretch at isoleucine 372–threonine 615 folds into the Peptidase S1 domain. Residue histidine 411 is the Charge relay system of the active site. N-linked (GlcNAc...) asparagine glycosylation occurs at asparagine 432. Aspartate 460 acts as the Charge relay system in catalysis. The active-site Charge relay system is the serine 564.

Belongs to the peptidase S1 family. Interacts with HRG; the interaction, which is enhanced in the presence of zinc ions and inhibited by heparin-binding, inhibits factor XII autoactivation and contact-initiated coagulation. In terms of processing, O- and N-glycosylated.

The protein localises to the secreted. It carries out the reaction Selective cleavage of Arg-|-Ile bonds in factor VII to form factor VIIa and factor XI to form factor XIa.. Activity is promoted in the presence of negatively charged surfaces. Functionally, factor XII is a serum glycoprotein that participates in the initiation of blood coagulation, fibrinolysis, and the generation of bradykinin and angiotensin. Prekallikrein is cleaved by factor XII to form kallikrein, which then cleaves factor XII first to alpha-factor XIIa and then trypsin cleaves it to beta-factor XIIa. Alpha-factor XIIa activates factor XI to factor XIa. This Sus scrofa (Pig) protein is Coagulation factor XII (F12).